An 859-amino-acid chain; its full sequence is DNA mismatch repair protein MutS (859 aa).

An ATP-binding site is contributed by 622-629 (GPNMGGKS).

Belongs to the DNA mismatch repair MutS family.

Functionally, this protein is involved in the repair of mismatches in DNA. It is possible that it carries out the mismatch recognition step. This protein has a weak ATPase activity. This chain is DNA mismatch repair protein MutS, found in Syntrophomonas wolfei subsp. wolfei (strain DSM 2245B / Goettingen).